The sequence spans 116 residues: Large ribosomal subunit protein uL18 (116 aa).

It belongs to the universal ribosomal protein uL18 family. Part of the 50S ribosomal subunit; part of the 5S rRNA/L5/L18/L25 subcomplex. Contacts the 5S and 23S rRNAs.

In terms of biological role, this is one of the proteins that bind and probably mediate the attachment of the 5S RNA into the large ribosomal subunit, where it forms part of the central protuberance. In Pseudoalteromonas translucida (strain TAC 125), this protein is Large ribosomal subunit protein uL18.